We begin with the raw amino-acid sequence, 233 residues long: MKNIMILSGAGLSAPSGLKTFRDNDGLWEEYDVMEVCSATGFRKNPKKVLDFYDARRAQLQNVKPNHAHEKIAQLKEKWGKNLFVITQNVDDLLERAGCKDVVHLHGFLPELRCLKCEGIFNIGYEKFTDKQCPKCKSKDLRHNIVMFEEQAPAYATLYSLLHQTSLFISIGTSGAVLPVGQYASMCEKSILNIYEKDVNLERYFDKIYIEDIISAIDKIALDIENFMKDGNV.

The Deacetylase sirtuin-type domain maps to 1-230 (MKNIMILSGA…ALDIENFMKD (230 aa)). NAD(+) is bound at residue 9–28 (GAGLSAPSGLKTFRDNDGLW). Residues Tyr-53 and Arg-56 each contribute to the substrate site. 88–91 (QNVD) serves as a coordination point for NAD(+). His-106 functions as the Proton acceptor in the catalytic mechanism. Zn(2+)-binding residues include Cys-114, Cys-117, Cys-133, and Cys-136. NAD(+) is bound by residues 172-174 (GTS) and 200-202 (NLE).

It belongs to the sirtuin family. Class III subfamily. Zn(2+) is required as a cofactor.

Its subcellular location is the cytoplasm. It carries out the reaction N(6)-acetyl-L-lysyl-[protein] + NAD(+) + H2O = 2''-O-acetyl-ADP-D-ribose + nicotinamide + L-lysyl-[protein]. It catalyses the reaction N(6)-succinyl-L-lysyl-[protein] + NAD(+) + H2O = 2''-O-succinyl-ADP-D-ribose + nicotinamide + L-lysyl-[protein]. Functionally, NAD-dependent lysine deacetylase and desuccinylase that specifically removes acetyl and succinyl groups on target proteins. Modulates the activities of several proteins which are inactive in their acylated form. This Campylobacter jejuni subsp. jejuni serotype O:2 (strain ATCC 700819 / NCTC 11168) protein is NAD-dependent protein deacylase.